The following is a 424-amino-acid chain: Interleukin-13 receptor subunit alpha-1 (424 aa).

The N-terminal stretch at 1-25 (MARPALLGELLVLLLWTATVGQVAA) is a signal peptide. Residues 26 to 340 (ATEVQPPVTN…QSIGKEQNST (315 aa)) are Extracellular-facing. One can recognise a Fibronectin type-III 1 domain in the interval 32–121 (PVTNLSVSVE…VKKCISPPEG (90 aa)). N-linked (GlcNAc...) asparagine glycosylation is found at Asn-35, Asn-59, Asn-103, and Asn-136. Cys-44 and Cys-93 are joined by a disulfide. Cystine bridges form between Cys-132–Cys-142 and Cys-171–Cys-183. Residues 224 to 336 (KPDPPHIKHL…WSEAQSIGKE (113 aa)) enclose the Fibronectin type-III 2 domain. N-linked (GlcNAc...) asparagine glycosylation is present at Asn-262. The WSXWS motif motif lies at 324–328 (WSDWS). A glycan (N-linked (GlcNAc...) asparagine) is linked at Asn-338. The chain crosses the membrane as a helical span at residues 341-364 (FYTTMLLTIPVFVAVAVIILLFYL). Topologically, residues 365-424 (KRLKIIIFPPIPDPGKIFKEMFGDQNDDTLHWKKYDIYEKQSKEETDSVVLIENLKKAAP) are cytoplasmic. Residues 371 to 379 (IFPPIPDPG) carry the Box 1 motif motif.

Belongs to the type I cytokine receptor family. Type 5 subfamily. Interleukin-13 receptor is a complex of IL4R, IL13RA1, and possibly other components. Interacts with TRAF3IP1. Interacts with IL4. Spleen, liver, thymus, heart, lung, kidney, testis, stomach, brain, skin, and colon; but not skeletal muscle.

It localises to the membrane. Its function is as follows. Binds with low affinity to interleukin-13 (IL13). Together with IL4RA can form a functional receptor for IL13. Also serves as an alternate accessory protein to the common cytokine receptor gamma chain for interleukin-4 (IL4) signaling, but cannot replace the function of IL2RG in allowing enhanced interleukin-2 (IL2) binding activity. The polypeptide is Interleukin-13 receptor subunit alpha-1 (Il13ra1) (Mus musculus (Mouse)).